The primary structure comprises 311 residues: Phospholipid phosphatase 3 (311 aa).

The Cytoplasmic segment spans residues Met1–Arg33. Ser19 bears the Phosphoserine mark. The helical transmembrane segment at Val34–Ile54 threads the bilayer. Topologically, residues Glu55–Asp85 are extracellular. A helical transmembrane segment spans residues Ala86–Tyr106. The Cytoplasmic portion of the chain corresponds to Arg107 to Tyr123. Positions Tyr109–Tyr110 match the Dityrosine basolateral targeting motif motif. A helical membrane pass occupies residues Val124 to Phe144. Residues Thr145 to Lys194 lie on the Extracellular side of the membrane. The phosphatase sequence motif I stretch occupies residues Lys149–Pro157. Residue Asn171 is glycosylated (N-linked (GlcNAc...) asparagine). The Integrin-binding motif motif lies at Arg183–Glu185. Residues Ser195–Leu215 traverse the membrane as a helical segment. Residues Phe197–His200 form a phosphatase sequence motif II region. His200 functions as the Proton donors in the catalytic mechanism. Residues Gln216–Leu226 are Cytoplasmic-facing. The helical transmembrane segment at Leu227–Leu244 threads the bilayer. A phosphatase sequence motif III region spans residues Ser245–Asp256. The Extracellular portion of the chain corresponds to Ser245–Leu258. Catalysis depends on His252, which acts as the Nucleophile. A helical membrane pass occupies residues Ala259–Phe279. Positions Ser276–Val311 are mediates interaction with CTNND1. At Lys280–Val311 the chain is on the cytoplasmic side.

The protein belongs to the PA-phosphatase related phosphoesterase family. As to quaternary structure, forms functional homodimers and homooligomers that are not required for substrate recognition and catalytic activity. Can also form heterooligomers with other PLPP2 and PLPP3. Interacts with CTNND1; negatively regulates the PLPP3-mediated stabilization of beta-catenin/CTNNB1. N-glycosylated. Contains high-mannose oligosaccharides.

It is found in the cell membrane. It localises to the basolateral cell membrane. The protein resides in the endoplasmic reticulum membrane. The protein localises to the endoplasmic reticulum-Golgi intermediate compartment membrane. Its subcellular location is the golgi apparatus membrane. It is found in the golgi apparatus. It localises to the trans-Golgi network membrane. The protein resides in the membrane raft. The catalysed reaction is a 1,2-diacyl-sn-glycero-3-phosphate + H2O = a 1,2-diacyl-sn-glycerol + phosphate. It catalyses the reaction 1,2-dihexadecanoyl-sn-glycero-3-phosphate + H2O = 1,2-dihexadecanoyl-sn-glycerol + phosphate. It carries out the reaction 1,2-di-(9Z-octadecenoyl)-sn-glycero-3-phosphate + H2O = 1,2-di-(9Z-octadecenoyl)-sn-glycerol + phosphate. The enzyme catalyses a monoacyl-sn-glycero-3-phosphate + H2O = a monoacylglycerol + phosphate. The catalysed reaction is (9Z)-octadecenoyl-sn-glycero-3-phosphate + H2O = (9Z-octadecenoyl)-glycerol + phosphate. It catalyses the reaction sphing-4-enine 1-phosphate + H2O = sphing-4-enine + phosphate. It carries out the reaction an N-acylsphing-4-enine 1-phosphate + H2O = an N-acylsphing-4-enine + phosphate. The enzyme catalyses N-(octanoyl)-sphing-4-enine-1-phosphate + H2O = N-octanoylsphing-4-enine + phosphate. The catalysed reaction is N-(9Z-octadecenoyl)-ethanolamine phosphate + H2O = N-(9Z-octadecenoyl) ethanolamine + phosphate. The protein operates within lipid metabolism; phospholipid metabolism. With respect to regulation, magnesium-independent phospholipid phosphatase. Insensitive to N-ethylmaleimide. Inhibited by sphingosine, zinc ions and modestly by propanolol. Its function is as follows. Magnesium-independent phospholipid phosphatase of the plasma membrane that catalyzes the dephosphorylation of a variety of glycerolipid and sphingolipid phosphate esters including phosphatidate/PA, lysophosphatidate/LPA, diacylglycerol pyrophosphate/DGPP, sphingosine 1-phosphate/S1P and ceramide 1-phosphate/C1P. Also acts on N-oleoyl ethanolamine phosphate/N-(9Z-octadecenoyl)-ethanolamine phosphate, a potential physiological compound. Has both an extracellular and an intracellular phosphatase activity, allowing the hydrolysis and the cellular uptake of these bioactive lipid mediators from the milieu, regulating signal transduction in different cellular processes. Through the dephosphorylation of extracellular sphingosine-1-phosphate and the regulation of its extra- and intracellular availability, plays a role in vascular homeostasis, regulating endothelial cell migration, adhesion, survival, proliferation and the production of pro-inflammatory cytokines. By maintaining the appropriate levels of this lipid in the cerebellum, also ensure its proper development and function. Through its intracellular lipid phosphatase activity may act in early compartments of the secretory pathway, regulating the formation of Golgi to endoplasmic reticulum retrograde transport carriers. Independently of this phosphatase activity may also function in the Wnt signaling pathway and the stabilization of beta-catenin/CTNNB1, thereby regulating cell proliferation, migration and differentiation in angiogenesis or yet in tumor growth. Also plays a role in integrin-mediated cell-cell adhesion in angiogenesis. The polypeptide is Phospholipid phosphatase 3 (Bos taurus (Bovine)).